Here is a 427-residue protein sequence, read N- to C-terminus: Serine--tRNA ligase (427 aa).

233 to 235 (TGE) is a binding site for L-serine. 264-266 (RSE) contacts ATP. Residue Glu287 coordinates L-serine. 351-354 (EVSS) serves as a coordination point for ATP. Residue Ser387 participates in L-serine binding.

It belongs to the class-II aminoacyl-tRNA synthetase family. Type-1 seryl-tRNA synthetase subfamily. Homodimer. The tRNA molecule binds across the dimer.

Its subcellular location is the cytoplasm. The enzyme catalyses tRNA(Ser) + L-serine + ATP = L-seryl-tRNA(Ser) + AMP + diphosphate + H(+). It catalyses the reaction tRNA(Sec) + L-serine + ATP = L-seryl-tRNA(Sec) + AMP + diphosphate + H(+). It participates in aminoacyl-tRNA biosynthesis; selenocysteinyl-tRNA(Sec) biosynthesis; L-seryl-tRNA(Sec) from L-serine and tRNA(Sec): step 1/1. In terms of biological role, catalyzes the attachment of serine to tRNA(Ser). Is also able to aminoacylate tRNA(Sec) with serine, to form the misacylated tRNA L-seryl-tRNA(Sec), which will be further converted into selenocysteinyl-tRNA(Sec). This chain is Serine--tRNA ligase, found in Buchnera aphidicola subsp. Acyrthosiphon pisum (strain 5A).